Consider the following 253-residue polypeptide: Pro-opiomelanocortin A (253 aa).

An N-terminal signal peptide occupies residues 1–21 (MLCPAWLLAVAVVGVVRGVKG). Pyrrolidone carboxylic acid is present on Q22. 2 disulfide bridges follow: C23/C45 and C29/C41. Position 104 is an N-acetylserine; in Corticotropin (S104). At V116 the chain carries Valine amide. The segment at 228-253 (QKREQWGREEGEEKRALGERKYHFQG) is disordered. Q252 is subject to Glutamine amide; partial.

Belongs to the POMC family. Specific enzymatic cleavages at paired basic residues yield the different active peptides. In terms of processing, acetylation of beta-endorphin occurs in a tissue-specific manner. In terms of tissue distribution, C-terminal peptide 1 and C-terminal peptide 2 are detected in the anterior part of the nucleus lateralis tuberis of hypothalamus, in dorsal hypothalamus, thalamus, telencephalon, optic tectum and medulla oblongata (at protein level). Expressed in pituitary and hypothalamus of adult diploid animals, and hypothalamus of triploid and ovulated female trout.

It is found in the secreted. In terms of biological role, stimulates the adrenal glands to release cortisol. Functionally, melanocyte-stimulating hormone alpha: Anorexigenic peptide. Increases the pigmentation of skin by increasing melanin production in melanocytes. Melanocyte-stimulating hormone beta: Increases the pigmentation of skin by increasing melanin production in melanocytes. Its function is as follows. Beta-endorphin: Endogenous orexigenic opiate. In terms of biological role, endogenous opiate. This Oncorhynchus mykiss (Rainbow trout) protein is Pro-opiomelanocortin A (pomca).